A 178-amino-acid chain; its full sequence is Transcription factor E (178 aa).

Residues 5–89 (AEELILSLAK…YWKVNIDQIN (85 aa)) form the HTH TFE/IIEalpha-type domain.

It belongs to the TFE family. As to quaternary structure, monomer. Interaction with RNA polymerase subunits RpoF and RpoE is necessary for Tfe stimulatory transcription activity. Able to interact with Tbp and RNA polymerase in the absence of DNA promoter. Interacts both with the preinitiation and elongation complexes.

Its function is as follows. Transcription factor that plays a role in the activation of archaeal genes transcribed by RNA polymerase. Facilitates transcription initiation by enhancing TATA-box recognition by TATA-box-binding protein (Tbp), and transcription factor B (Tfb) and RNA polymerase recruitment. Not absolutely required for transcription in vitro, but particularly important in cases where Tbp or Tfb function is not optimal. It dynamically alters the nucleic acid-binding properties of RNA polymerases by stabilizing the initiation complex and destabilizing elongation complexes. Seems to translocate with the RNA polymerase following initiation and acts by binding to the non template strand of the transcription bubble in elongation complexes. The sequence is that of Transcription factor E from Sulfurisphaera tokodaii (strain DSM 16993 / JCM 10545 / NBRC 100140 / 7) (Sulfolobus tokodaii).